The sequence spans 389 residues: Major outer membrane porin (389 aa).

The N-terminal stretch at Met-1–Ala-23 is a signal peptide.

The protein belongs to the chlamydial porin (CP) (TC 1.B.2) family. In terms of assembly, part of a disulfide cross-linked outer membrane complex (COMC) composed of the major outer membrane porin (MOMP), the small cysteine-rich protein (OmcA) and the large cysteine-rich periplasmic protein (OmcB).

The protein resides in the cell outer membrane. In elementary bodies (EBs, the infectious stage, which is able to survive outside the host cell) provides the structural integrity of the outer envelope through disulfide cross-links with the small cysteine-rich protein and the large cysteine-rich periplasmic protein. It has been described in publications as the Sarkosyl-insoluble COMC (Chlamydia outer membrane complex), and serves as the functional equivalent of peptidoglycan. Its function is as follows. Permits diffusion of specific solutes through the outer membrane. The chain is Major outer membrane porin (ompA) from Chlamydia pneumoniae (Chlamydophila pneumoniae).